Reading from the N-terminus, the 363-residue chain is Endopolygalacturonase B (363 aa).

A signal peptide spans 1 to 20 (MQLLQSSVIAATVGAALVAA). Positions 21-28 (VPVELKAR) are excised as a propeptide. Cys-31 and Cys-46 are joined by a disulfide. PbH1 repeat units follow at residues 158–187 (SDNL…DVGS), 188–209 (STYI…AINS), 210–230 (GSHI…SIGS), 239–260 (VEDV…RIKT), 268–290 (VSNV…IVEQ), and 302–347 (TNGI…SITG). The N-linked (GlcNAc...) asparagine glycan is linked to Asn-162. Asp-202 serves as the catalytic Proton donor. Cysteines 204 and 220 form a disulfide. His-224 is a catalytic residue. 2 cysteine pairs are disulfide-bonded: Cys-330/Cys-335 and Cys-354/Cys-363. The N-linked (GlcNAc...) asparagine glycan is linked to Asn-356.

Belongs to the glycosyl hydrolase 28 family.

The protein localises to the secreted. The enzyme catalyses (1,4-alpha-D-galacturonosyl)n+m + H2O = (1,4-alpha-D-galacturonosyl)n + (1,4-alpha-D-galacturonosyl)m.. In terms of biological role, involved in maceration and soft-rotting of plant tissue. Hydrolyzes the 1,4-alpha glycosidic bonds of de-esterified pectate in the smooth region of the plant cell wall. This is Endopolygalacturonase B (pgaB) from Aspergillus oryzae (strain ATCC 42149 / RIB 40) (Yellow koji mold).